Here is a 339-residue protein sequence, read N- to C-terminus: Deubiquitinase and deneddylase Dub2 (339 aa).

Residues 36–56 traverse the membrane as a helical segment; the sequence is IIIALFLIVISCGLILCAYTF. Active-site residues include His-203, Asp-220, and Cys-282.

It belongs to the peptidase C48 family.

The protein localises to the secreted. It localises to the host cell. Its subcellular location is the membrane. Functionally, effector proteins function to alter host cell physiology and promote bacterial survival in host tissues. This protease possesses deubiquitinating and deneddylating activities. In Chlamydia trachomatis serovar B (strain Jali20/OT), this protein is Deubiquitinase and deneddylase Dub2 (cdu2).